The primary structure comprises 331 residues: ADP-L-glycero-D-manno-heptose-6-epimerase (331 aa).

Residues Phe-11–Ile-12, Asp-32–Asn-33, Lys-39, Lys-54, Glu-75–Ser-79, and Asn-92 each bind NADP(+). The active-site Proton acceptor is the Tyr-139. Residue Lys-143 coordinates NADP(+). Residue Asn-168 coordinates substrate. Positions 169 and 177 each coordinate NADP(+). Lys-177 functions as the Proton acceptor in the catalytic mechanism. Substrate contacts are provided by residues Arg-179, His-186, Phe-200–Tyr-203, Arg-213, and Tyr-292.

It belongs to the NAD(P)-dependent epimerase/dehydratase family. HldD subfamily. Homopentamer. It depends on NADP(+) as a cofactor.

The catalysed reaction is ADP-D-glycero-beta-D-manno-heptose = ADP-L-glycero-beta-D-manno-heptose. The protein operates within nucleotide-sugar biosynthesis; ADP-L-glycero-beta-D-manno-heptose biosynthesis; ADP-L-glycero-beta-D-manno-heptose from D-glycero-beta-D-manno-heptose 7-phosphate: step 4/4. Functionally, catalyzes the interconversion between ADP-D-glycero-beta-D-manno-heptose and ADP-L-glycero-beta-D-manno-heptose via an epimerization at carbon 6 of the heptose. The polypeptide is ADP-L-glycero-D-manno-heptose-6-epimerase (Cupriavidus metallidurans (strain ATCC 43123 / DSM 2839 / NBRC 102507 / CH34) (Ralstonia metallidurans)).